The following is a 212-amino-acid chain: Ribosomal RNA large subunit methyltransferase E (212 aa).

Residues glycine 57, tryptophan 59, aspartate 77, aspartate 93, and aspartate 122 each coordinate S-adenosyl-L-methionine. Catalysis depends on lysine 162, which acts as the Proton acceptor.

Belongs to the class I-like SAM-binding methyltransferase superfamily. RNA methyltransferase RlmE family.

It localises to the cytoplasm. The catalysed reaction is uridine(2552) in 23S rRNA + S-adenosyl-L-methionine = 2'-O-methyluridine(2552) in 23S rRNA + S-adenosyl-L-homocysteine + H(+). Functionally, specifically methylates the uridine in position 2552 of 23S rRNA at the 2'-O position of the ribose in the fully assembled 50S ribosomal subunit. This Coxiella burnetii (strain RSA 493 / Nine Mile phase I) protein is Ribosomal RNA large subunit methyltransferase E.